Consider the following 327-residue polypeptide: tRNA uridine(34) hydroxylase (327 aa).

The Rhodanese domain occupies 123 to 217 (SDPEVLLVDT…YLEEVKQEES (95 aa)). Cys177 functions as the Cysteine persulfide intermediate in the catalytic mechanism.

The protein belongs to the TrhO family.

It catalyses the reaction uridine(34) in tRNA + AH2 + O2 = 5-hydroxyuridine(34) in tRNA + A + H2O. Catalyzes oxygen-dependent 5-hydroxyuridine (ho5U) modification at position 34 in tRNAs. The sequence is that of tRNA uridine(34) hydroxylase from Shewanella piezotolerans (strain WP3 / JCM 13877).